Consider the following 324-residue polypeptide: Putative S-adenosyl-L-methionine-dependent methyltransferase MUL_0818 (324 aa).

Residues D138 and 167-168 contribute to the S-adenosyl-L-methionine site; that span reads DL.

This sequence belongs to the UPF0677 family.

Exhibits S-adenosyl-L-methionine-dependent methyltransferase activity. This chain is Putative S-adenosyl-L-methionine-dependent methyltransferase MUL_0818, found in Mycobacterium ulcerans (strain Agy99).